Reading from the N-terminus, the 1160-residue chain is Protein GIGANTEA (1160 aa).

Polar residues predominate over residues 158–169 (CSSTSDQASSCE). 3 disordered regions span residues 158–188 (CSST…RKPL), 600–629 (GGSK…RNRC), and 800–830 (PVKK…SRSH). The segment covering 170–187 (SMEKRANGSPRNEPDRKP) has biased composition (basic and acidic residues). The segment covering 801–812 (VKKDEPPIEEKN) has biased composition (basic and acidic residues).

The protein belongs to the GIGANTEA family.

The protein localises to the nucleus. Its function is as follows. Involved in regulation of circadian rhythm, and in the control of the photoperiodic flowering. Acts as a suppressor of flowering under short-day (SD) and long-day (LD) conditions. Activates Hd1/CONSTANS gene. This Oryza sativa subsp. japonica (Rice) protein is Protein GIGANTEA (GI).